The primary structure comprises 278 residues: 3-methyl-2-oxobutanoate hydroxymethyltransferase (278 aa).

Residues Asp-43 and Asp-82 each contribute to the Mg(2+) site. 3-methyl-2-oxobutanoate contacts are provided by residues 43–44 (DS), Asp-82, and Lys-112. Residue Glu-114 participates in Mg(2+) binding. The active-site Proton acceptor is the Glu-181.

Belongs to the PanB family. Homodecamer; pentamer of dimers. Mg(2+) serves as cofactor.

The protein resides in the cytoplasm. The catalysed reaction is 3-methyl-2-oxobutanoate + (6R)-5,10-methylene-5,6,7,8-tetrahydrofolate + H2O = 2-dehydropantoate + (6S)-5,6,7,8-tetrahydrofolate. Its pathway is cofactor biosynthesis; (R)-pantothenate biosynthesis; (R)-pantoate from 3-methyl-2-oxobutanoate: step 1/2. Functionally, catalyzes the reversible reaction in which hydroxymethyl group from 5,10-methylenetetrahydrofolate is transferred onto alpha-ketoisovalerate to form ketopantoate. This is 3-methyl-2-oxobutanoate hydroxymethyltransferase from Bacillus cereus (strain B4264).